We begin with the raw amino-acid sequence, 170 residues long: Calcineurin subunit B type 1 (170 aa).

EF-hand domains follow at residues 18 to 46, 50 to 85, 87 to 122, and 128 to 163; these read DEIR…FMSL, QQNP…FSVR, DKLS…MVGN, and QLQQ…TDIH. Ca(2+) contacts are provided by Asp-31, Asp-33, Ser-35, Glu-42, Asp-63, Asp-65, Asn-67, Glu-69, Glu-74, Asp-100, Asp-102, Asp-104, Tyr-106, Glu-111, Asp-141, Asp-143, Asp-145, Lys-147, and Glu-152.

The protein belongs to the calcineurin regulatory subunit family. In terms of assembly, composed of two components (A and B), the A component is the catalytic subunit and the B component confers calcium sensitivity.

Functionally, calcineurin is a calcium-binding and calmodulin-binding protein found in all cells from yeast to mammals, and a calcium-dependent, calmodulin-stimulated protein phosphatase. The protein is Calcineurin subunit B type 1 (CanB) of Drosophila melanogaster (Fruit fly).